A 124-amino-acid chain; its full sequence is Small ribosomal subunit protein bS16 (124 aa).

Residues 80-124 form a disordered region; sequence AGLAKRPARNNPTKAQPGKKAQERAAEAKQKAEEAAAAASEAAAE. The span at 99 to 113 shows a compositional bias: basic and acidic residues; that stretch reads KAQERAAEAKQKAEE. The segment covering 114–124 has biased composition (low complexity); that stretch reads AAAAASEAAAE.

It belongs to the bacterial ribosomal protein bS16 family.

The chain is Small ribosomal subunit protein bS16 from Rhizobium meliloti (strain 1021) (Ensifer meliloti).